Consider the following 112-residue polypeptide: ATP-dependent Clp protease adapter protein ClpS (112 aa).

This sequence belongs to the ClpS family. In terms of assembly, binds to the N-terminal domain of the chaperone ClpA.

Functionally, involved in the modulation of the specificity of the ClpAP-mediated ATP-dependent protein degradation. In Rhodococcus opacus (strain B4), this protein is ATP-dependent Clp protease adapter protein ClpS.